The following is a 149-amino-acid chain: Calmodulin-1 (149 aa).

At alanine 2 the chain carries N-acetylalanine. EF-hand domains lie at 8-43 (EQIA…LGQN), 44-79 (PTEA…KMKD), 81-116 (DSEE…LGEK), and 117-149 (LTDE…MTAK). Residue aspartate 21 participates in Ca(2+) binding. At lysine 22 the chain carries N6-acetyllysine; alternate. Lysine 22 is covalently cross-linked (Glycyl lysine isopeptide (Lys-Gly) (interchain with G-Cter in SUMO2); alternate). A Glycyl lysine isopeptide (Lys-Gly) (interchain with G-Cter in ubiquitin); alternate cross-link involves residue lysine 22. Residues aspartate 23, aspartate 25, threonine 27, and glutamate 32 each contribute to the Ca(2+) site. Threonine 45 bears the Phosphothreonine; by CaMK4 mark. Residues aspartate 57, aspartate 59, asparagine 61, threonine 63, and glutamate 68 each coordinate Ca(2+). The interval 77–149 (MKDTDSEEEI…EEFVQMMTAK (73 aa)) is necessary and sufficient for interaction with PCP4. The residue at position 82 (serine 82) is a Phosphoserine. A Ca(2+)-binding site is contributed by aspartate 94. Lysine 95 carries the N6-acetyllysine modification. The Ca(2+) site is built by aspartate 96, asparagine 98, and tyrosine 100. Position 100 is a phosphotyrosine (tyrosine 100). Serine 102 carries the phosphoserine modification. Glutamate 105 contacts Ca(2+). A Phosphothreonine modification is found at threonine 111. Position 116 is an N6,N6,N6-trimethyllysine; alternate (lysine 116). The residue at position 116 (lysine 116) is an N6-methyllysine; alternate. Ca(2+) is bound by residues aspartate 130, aspartate 132, aspartate 134, and glutamine 136. At tyrosine 139 the chain carries Phosphotyrosine. Residue glutamate 141 participates in Ca(2+) binding.

This sequence belongs to the calmodulin family. As to quaternary structure, homotetramer. Interacts with MYO1C, MYO5A and RRAD. Interacts with MYO10. Interacts with CEP97, CCP110, TTN/titin and SRY. Interacts with USP6; the interaction is calcium dependent. Interacts with CDK5RAP2. Interacts with SCN5A. Interacts with RYR1. Interacts with FCHO1. Interacts with MIP in a 1:2 stoichiometry; the interaction with the cytoplasmic domains from two MIP subunits promotes MIP water channel closure. Interacts with ORAI1; this may play a role in the regulation of ORAI1-mediated calcium transport. Interacts with IQCF1. Interacts with SYT7. Interacts with CEACAM1 (via cytoplasmic domain); this interaction is in a calcium dependent manner and reduces homophilic cell adhesion through dissociation of dimer. Interacts with RYR2; regulates RYR2 calcium-release channel activity. Interacts with PCP4; regulates calmodulin calcium-binding. Interacts with the heterotetrameric KCNQ2 and KCNQ3 channel; the interaction is calcium-independent, constitutive and participates in the proper assembly of a functional heterotetrameric M channel. Interacts with alpha-synuclein/SNCA. Interacts with SLC9A1 in a calcium-dependent manner. In the absence of Ca(+2), interacts with GIMAP4 (via IQ domain). Interacts with SCN8A; the interaction modulates the inactivation rate of SCN8A. Interaction with KIF1A; the interaction is increased in presence of calcium and increases neuronal dense core vesicles motility. Interacts with KCNN3. Interacts with KCNQ1 (via C-terminus); forms a heterooctameric structure (with 4:4 KCNQ1:CALM stoichiometry) in a calcium-independent manner. Interacts with PIK3C3; the interaction modulates PIK3C3 kinase activity. Interacts with HINT1; interaction increases in the presence of calcium ions. Interacts with HINT3. Interacts with GARIN2; in mature sperm flagella. Interacts with IQUB. Interacts with SLC26A5 (via STAS domain); this interaction is calcium-dependent and the STAS domain interacts with only one lobe of CALM which is an elongated conformation. Ca(2+)-bound CALM1 binds CNGA1:CNGB1 channel (via CaM1 and CaM2 regions); this interaction modulates the affinity of the channel for cNMPs in response to intracellular Ca(2+) levels. Interacts with ITPR1; this interaction inhibits inositol 1,4,5 trisphosphate binding in both the presence and absence of calcium and 1,4,5 trisphosphate-induced calcium release in the presence of calcium. Component of the SIFI complex. Interacts with KCNN4; this interaction allows channel opening. Interacts with KCNN2; this interaction regulates the channel activity through calcium-binding. (Microbial infection) Interacts with Rubella virus protease/methyltransferase p150. In terms of assembly, (Microbial infection) Interacts with Legionella pneumophila glutamylase SidJ. As to quaternary structure, (Microbial infection) Interacts with C.violaceum CopC. C.violaceum CopC interacts specifically with the apo form of calmodulin. (Microbial infection) Interacts with S.flexneri OspC1 and OspC3. S.flexneri OspC1 and OspC3 interact specifically with the apo form of calmodulin and prevents calcium-binding. Ubiquitination results in a strongly decreased activity. Post-translationally, phosphorylation results in a decreased activity.

The protein localises to the cytoplasm. Its subcellular location is the cytoskeleton. The protein resides in the spindle. It localises to the spindle pole. It is found in the microtubule organizing center. The protein localises to the centrosome. Its subcellular location is the cell projection. The protein resides in the cilium. It localises to the flagellum. With respect to regulation, (Microbial infection) Inactivated by S.flexneri OspC1 and OspC3 proteins, which specifically bind the apo-form of calmodulin, thereby preventing calcium-binding and activity. Its function is as follows. Calmodulin acts as part of a calcium signal transduction pathway by mediating the control of a large number of enzymes, ion channels, aquaporins and other proteins through calcium-binding. Calcium-binding is required for the activation of calmodulin. Among the enzymes to be stimulated by the calmodulin-calcium complex are a number of protein kinases, such as myosin light-chain kinases and calmodulin-dependent protein kinase type II (CaMK2), and phosphatases. Together with CCP110 and centrin, is involved in a genetic pathway that regulates the centrosome cycle and progression through cytokinesis. Is a regulator of voltage-dependent L-type calcium channels. Mediates calcium-dependent inactivation of CACNA1C. Positively regulates calcium-activated potassium channel activity of KCNN2. Forms a potassium channel complex with KCNQ1 and regulates electrophysiological activity of the channel via calcium-binding. Acts as a sensor to modulate the endoplasmic reticulum contacts with other organelles mediated by VMP1:ATP2A2. Functionally, (Microbial infection) Required for Legionella pneumophila SidJ glutamylase activity. (Microbial infection) Required for C.violaceum CopC and S.flexneri OspC3 arginine ADP-riboxanase activity. This Homo sapiens (Human) protein is Calmodulin-1.